Here is a 363-residue protein sequence, read N- to C-terminus: UDP-3-O-acylglucosamine N-acyltransferase (363 aa).

The active-site Proton acceptor is H252.

Belongs to the transferase hexapeptide repeat family. LpxD subfamily. As to quaternary structure, homotrimer.

It catalyses the reaction a UDP-3-O-[(3R)-3-hydroxyacyl]-alpha-D-glucosamine + a (3R)-hydroxyacyl-[ACP] = a UDP-2-N,3-O-bis[(3R)-3-hydroxyacyl]-alpha-D-glucosamine + holo-[ACP] + H(+). It functions in the pathway bacterial outer membrane biogenesis; LPS lipid A biosynthesis. Catalyzes the N-acylation of UDP-3-O-acylglucosamine using 3-hydroxyacyl-ACP as the acyl donor. Is involved in the biosynthesis of lipid A, a phosphorylated glycolipid that anchors the lipopolysaccharide to the outer membrane of the cell. This chain is UDP-3-O-acylglucosamine N-acyltransferase, found in Cupriavidus taiwanensis (strain DSM 17343 / BCRC 17206 / CCUG 44338 / CIP 107171 / LMG 19424 / R1) (Ralstonia taiwanensis (strain LMG 19424)).